Consider the following 438-residue polypeptide: Aspartic proteinase nepenthesin-2 (438 aa).

The N-terminal stretch at methionine 1 to serine 24 is a signal peptide. The propeptide at threonine 25–leucine 79 is activation peptide. N-linked (GlcNAc...) asparagine glycosylation occurs at asparagine 54. Residues tyrosine 96–valine 431 enclose the Peptidase A1 domain. Aspartate 114 is a catalytic residue. 6 cysteine pairs are disulfide-bonded: cysteine 124/cysteine 127, cysteine 130/cysteine 204, cysteine 151/cysteine 169, cysteine 156/cysteine 164, cysteine 241/cysteine 435, and cysteine 354/cysteine 395. Aspartate 315 is an active-site residue.

The protein belongs to the peptidase A1 family.

The protein resides in the secreted. It catalyses the reaction Similar to pepsin, but also cleaves on either side of Asp and at Lys-|-Arg.. Its activity is regulated as follows. Inhibited by pepstatin and by diazoacetyl-D,L-norleucine methyl ester (DAN) in the presence of Cu(2+) ions. In terms of biological role, extracellular proteinase found in the pitcher fluid of carnivorous plants. Digest prey for nitrogen uptake. The chain is Aspartic proteinase nepenthesin-2 (nep2) from Nepenthes gracilis (Slender pitcher plant).